A 194-amino-acid polypeptide reads, in one-letter code: Imidazoleglycerol-phosphate dehydratase (194 aa).

Belongs to the imidazoleglycerol-phosphate dehydratase family.

It is found in the cytoplasm. The enzyme catalyses D-erythro-1-(imidazol-4-yl)glycerol 3-phosphate = 3-(imidazol-4-yl)-2-oxopropyl phosphate + H2O. Its pathway is amino-acid biosynthesis; L-histidine biosynthesis; L-histidine from 5-phospho-alpha-D-ribose 1-diphosphate: step 6/9. The sequence is that of Imidazoleglycerol-phosphate dehydratase from Lactiplantibacillus plantarum (strain ATCC BAA-793 / NCIMB 8826 / WCFS1) (Lactobacillus plantarum).